Consider the following 73-residue polypeptide: Nodulin-1 (73 aa).

The signal sequence occupies residues Met-1 to Ala-23. Cystine bridges form between Cys-39/Cys-64, Cys-49/Cys-71, and Cys-53/Cys-73.

In terms of tissue distribution, expressed in nodules, but not in leaves, stems, flowers and roots. In developing nodules, expressed close to the infection threads.

It localises to the secreted. Functionally, nodulation-related protein probably involved in the infection process. The protein is Nodulin-1 (N1) of Medicago truncatula (Barrel medic).